The primary structure comprises 723 residues: Peroxisomal bifunctional enzyme (723 aa).

The interval 1-282 is enoyl-CoA hydratase / isomerase; it reads MAEYTRLHNA…LAERKANKWS (282 aa). The residue at position 38 (Lys-38) is an N6-succinyllysine. Position 101 (Gly-101) interacts with substrate. An N6-acetyllysine; alternate modification is found at Lys-165. The residue at position 165 (Lys-165) is an N6-succinyllysine; alternate. Lys-171 carries the N6-acetyllysine modification. Lys-219 is subject to N6-acetyllysine; alternate. Lys-219 bears the N6-succinyllysine; alternate mark. Lys-250 is modified (N6-acetyllysine). 2 positions are modified to N6-succinyllysine: Lys-280 and Lys-290. Residues 283 to 572 are 3-hydroxyacyl-CoA dehydrogenase; sequence TPSGASWKTA…DVLCELGRFG (290 aa). 3 positions are modified to N6-acetyllysine: Lys-346, Lys-350, and Lys-464. Lys-532 bears the N6-succinyllysine mark. Thr-548 bears the Phosphothreonine mark. At Lys-577 the chain carries N6-succinyllysine. N6-acetyllysine; alternate is present on residues Lys-584, Lys-591, and Lys-710. Lys-584, Lys-591, and Lys-710 each carry N6-succinyllysine; alternate. A disordered region spans residues 699–723; the sequence is KKLASQGNPPQKEWQSLAGSPSSKL. Positions 703 to 723 are enriched in polar residues; the sequence is SQGNPPQKEWQSLAGSPSSKL. Phosphoserine is present on Ser-718. The Microbody targeting signal signature appears at 721 to 723; that stretch reads SKL. Lys-722 bears the N6-succinyllysine mark.

It in the N-terminal section; belongs to the enoyl-CoA hydratase/isomerase family. This sequence in the C-terminal section; belongs to the 3-hydroxyacyl-CoA dehydrogenase family. As to quaternary structure, monomer. Post-translationally, acetylated, leading to enhanced enzyme activity. Acetylation is enhanced by up to 80% after treatment either with trichostin A (TSA) or with nicotinamide (NAM) with highest increase on Lys-346. Acetylation and enzyme activity increased by about 1.5% on addition of fatty acids.

It is found in the peroxisome. It catalyses the reaction a (3S)-3-hydroxyacyl-CoA = a (2E)-enoyl-CoA + H2O. The enzyme catalyses a 4-saturated-(3S)-3-hydroxyacyl-CoA = a (3E)-enoyl-CoA + H2O. The catalysed reaction is a (3Z)-enoyl-CoA = a 4-saturated (2E)-enoyl-CoA. It carries out the reaction a (3E)-enoyl-CoA = a 4-saturated (2E)-enoyl-CoA. It catalyses the reaction a (3S)-3-hydroxyacyl-CoA + NAD(+) = a 3-oxoacyl-CoA + NADH + H(+). The enzyme catalyses (2S,3S)-3-hydroxy-2-methylbutanoyl-CoA = (2E)-2-methylbut-2-enoyl-CoA + H2O. The catalysed reaction is (3S)-hydroxyhexadecanoyl-CoA + NAD(+) = 3-oxohexadecanoyl-CoA + NADH + H(+). It carries out the reaction (3S)-hydroxyhexadecanoyl-CoA = (2E)-hexadecenoyl-CoA + H2O. It catalyses the reaction (2E)-hexadecenedioyl-CoA + H2O = (3S)-hydroxyhexadecanedioyl-CoA. The enzyme catalyses (3S)-hydroxyhexadecanedioyl-CoA + NAD(+) = 3-oxohexadecanedioyl-CoA + NADH + H(+). The catalysed reaction is (3E,5Z)-tetradecadienoyl-CoA = (2E,5Z)-tetradecadienoyl-CoA. It carries out the reaction (3E,5Z)-octadienoyl-CoA = (2E,5Z)-octadienoyl-CoA. It catalyses the reaction (3S)-hydroxydecanoyl-CoA + NAD(+) = 3-oxodecanoyl-CoA + NADH + H(+). The enzyme catalyses (3E)-decenoyl-CoA = (2E)-decenoyl-CoA. The catalysed reaction is (3Z)-hexenoyl-CoA = (2E)-hexenoyl-CoA. It carries out the reaction (3E)-hexenoyl-CoA = (2E)-hexenoyl-CoA. It catalyses the reaction (3S)-hydroxydecanoyl-CoA = (2E)-decenoyl-CoA + H2O. The enzyme catalyses (3S)-hydroxyhexanoyl-CoA = (2E)-hexenoyl-CoA + H2O. It functions in the pathway lipid metabolism; fatty acid beta-oxidation. Its activity is regulated as follows. Enzyme activity enhanced by acetylation. In terms of biological role, peroxisomal trifunctional enzyme possessing 2-enoyl-CoA hydratase, 3-hydroxyacyl-CoA dehydrogenase, and delta 3, delta 2-enoyl-CoA isomerase activities. Catalyzes two of the four reactions of the long chain fatty acids peroxisomal beta-oxidation pathway. Can also use branched-chain fatty acids such as 2-methyl-2E-butenoyl-CoA as a substrate, which is hydrated into (2S,3S)-3-hydroxy-2-methylbutanoyl-CoA. Optimal isomerase for 2,5 double bonds into 3,5 form isomerization in a range of enoyl-CoA species. Also able to isomerize both 3-cis and 3-trans double bonds into the 2-trans form in a range of enoyl-CoA species. Regulates the amount of medium-chain dicarboxylic fatty acids which are essential regulators of all fatty acid oxidation pathways. Also involved in the degradation of long-chain dicarboxylic acids through peroxisomal beta-oxidation. This Pongo abelii (Sumatran orangutan) protein is Peroxisomal bifunctional enzyme (EHHADH).